Consider the following 415-residue polypeptide: Transcriptional regulator fogI (415 aa).

The segment at residues 12-39 (CNACNESKVRCSQTKPTCARCERNKTTC) is a DNA-binding region (zn(2)-C6 fungal-type). A disordered region spans residues 50–153 (DAPPISLSHS…ILSPANLDLP (104 aa)). 2 stretches are compositionally biased toward low complexity: residues 80–102 (VHIPNATATANATTTANYTSTTT) and 123–135 (QFFAQQQPHHQQP).

It localises to the nucleus. In terms of biological role, transcriptional regulator that postively regulates the expression of the gene cluster that mediates the biosynthesis of flavoglaucin and congeners (including aspergin, dihydroauroglaucin and auroglaucin), prenylated salicylaldehyde derivatives carrying a saturated or an unsaturated C-7 side chain. This chain is Transcriptional regulator fogI, found in Aspergillus ruber (strain CBS 135680).